Here is a 449-residue protein sequence, read N- to C-terminus: UPF0761 membrane protein Cpha266_1653 (449 aa).

6 consecutive transmembrane segments (helical) span residues L77–F97, S133–I153, F173–A193, L214–V234, A244–F264, and G277–L297.

Belongs to the UPF0761 family.

Its subcellular location is the cell inner membrane. In Chlorobium phaeobacteroides (strain DSM 266 / SMG 266 / 2430), this protein is UPF0761 membrane protein Cpha266_1653.